Reading from the N-terminus, the 200-residue chain is MEHICGTSRIAGFRFSLYPMTDDFISVIKSALKKTDTSKVWTKTDHISTVLRGSIDHVFDAAKAIYLHAANSEQHIVMNGTFSIGCPGDTQGDTYLSKGDKRVNEDAVRGLKAEAPCQFALYPMNEPDYMGLIMEAVDIAKAQGTFVQGVHYASELDGDAHDVFSTLEAVFRMAEQQTNHITMTVNLSANSPSRKNRKQG.

Residues Leu-17 and Thr-49 each contribute to the thiamine site.

As to quaternary structure, homodimer in vitro. In vivo, may be a part of an ABC transporter complex which is composed of two ATP-binding proteins (YkoD), two transmembrane proteins (YkoC and YkoE) and a solute-binding protein (YkoF).

Part of the ABC transporter complex YkoCDEF that could transport hydroxymethylpyrimidine (HMP) and/or thiamine. Could also transport other HMP-containing products. Binds thiamine via its HMP moiety. This is Putative HMP/thiamine-binding protein YkoF (ykoF) from Bacillus subtilis (strain 168).